We begin with the raw amino-acid sequence, 624 residues long: Galactan 5-O-arabinofuranosyltransferase (624 aa).

The next 13 helical transmembrane spans lie at 5–25 (VLGQ…VAIA), 43–63 (ALTT…GLLW), 73–93 (LGAL…PLGA), 127–147 (IGLP…IAAA), 159–179 (WSIV…AAMI), 181–201 (FEYA…YAST), 203–223 (PYAA…WAGL), 234–254 (AIVG…LLLV), 280–300 (LAVI…PYLL), 326–346 (FPMF…VWLV), 355–375 (AGAL…SMLT), 391–411 (LTVL…LAIA), and 422–442 (VVAA…QDIP).

Belongs to the glycosyltransferase 85 family.

It localises to the cell membrane. It catalyses the reaction Adds an alpha-D-arabinofuranosyl group from trans,octacis-decaprenylphospho-beta-D-arabinofuranose at the 5-O-position of the eighth, tenth and twelfth galactofuranose unit of the galactofuranan chain of [beta-D-galactofuranosyl-(1-&gt;5)-beta-D-galactofuranosyl-(1-&gt;6)]14-beta-D-galactofuranosyl-(1-&gt;5)-beta-D-galactofuranosyl-(1-&gt;4)-alpha-L-rhamnopyranosyl-(1-&gt;3)-N-acetyl-alpha-D-glucosaminyl-diphospho-trans,octacis-decaprenol.. It functions in the pathway cell wall biogenesis; cell wall polysaccharide biosynthesis. Functionally, involved in the biosynthesis of the arabinogalactan (AG) region of the mycolylarabinogalactan-peptidoglycan (mAGP) complex, an essential component of the mycobacterial cell wall. Catalyzes the addition of the first key arabinofuranosyl (Araf) residue from the sugar donor decaprenyl-phospho-arabinose (DPA) on the C-5 of a 6-linked galactofuranosyl (Galf) of the galactan domain, thus 'priming' the galactan for further elaboration by other arabinofuranosyltransferases. It is not able to add an Araf residue to a terminal Galf. This is Galactan 5-O-arabinofuranosyltransferase from Mycolicibacterium smegmatis (strain ATCC 700084 / mc(2)155) (Mycobacterium smegmatis).